The primary structure comprises 193 residues: Ion-translocating oxidoreductase complex subunit A (193 aa).

6 helical membrane-spanning segments follow: residues 5–25, 39–59, 63–83, 102–122, 134–154, and 171–191; these read LLLL…FLGL, VGMG…SYLM, ILIP…VIAV, LLGI…VALL, IIYG…FAAM, and SIAM…TGLI.

This sequence belongs to the NqrDE/RnfAE family. In terms of assembly, the complex is composed of six subunits: RnfA, RnfB, RnfC, RnfD, RnfE and RnfG.

It is found in the cell inner membrane. In terms of biological role, part of a membrane-bound complex that couples electron transfer with translocation of ions across the membrane. The protein is Ion-translocating oxidoreductase complex subunit A of Aeromonas salmonicida (strain A449).